A 1186-amino-acid polypeptide reads, in one-letter code: Syntaxin-binding protein 5-like (1186 aa).

Met1 is subject to N-acetylmethionine. The tract at residues Ala15–Ala40 is disordered. The segment covering Ser16–Ser26 has biased composition (low complexity). 10 WD repeats span residues Thr74–Gln107, Val114–Phe153, Ile158–Ile194, His213–Val247, Ile253–Pro285, Pro307–Thr349, Ile357–Leu391, Thr413–Lys490, Gln518–Ile629, and Thr643–Asn705. The residue at position 568 (Thr568) is a Phosphothreonine. Residues Ser574, Ser589, and Ser593 each carry the phosphoserine modification. The residue at position 596 (Thr596) is a Phosphothreonine. Position 599 is a phosphoserine (Ser599). Arg709 carries the post-translational modification Omega-N-methylarginine. Polar residues predominate over residues Thr748–Arg769. Residues Thr748 to Ser771 form a disordered region. Ser763, Ser765, Ser766, Ser771, Ser772, Ser793, Ser800, Ser812, Ser820, Ser822, and Ser823 each carry phosphoserine. WD repeat units lie at residues Ile832–Phe889, Thr898–Leu969, Ile974–Asn1018, and Cys1032–Gln1055. A Phosphothreonine modification is found at Thr1093. In terms of domain architecture, v-SNARE coiled-coil homology spans Ser1121–Lys1181.

This sequence belongs to the WD repeat L(2)GL family. In terms of assembly, interacts with STX1A and STX4. Post-translationally, phosphorylated, leading to STXBP5L increased turnover and subsequent de-repression of insulin secretion. Phosphorylated on serine residues in response to glucose or phorbol esters. Ubiquitinated by the E3 ligase SYVN1, leading to STXBP5L proteasomal degradation. In terms of tissue distribution, detected in kidney, hippocampus and lung carcinoma.

Its subcellular location is the cytoplasm. The protein resides in the cell membrane. It localises to the membrane. Functionally, plays a role in vesicle trafficking and exocytosis inhibition. In pancreatic beta-cells, inhibits insulin secretion probably by interacting with and regulating STX1A and STX4, key t-SNARE proteins involved in the fusion of insulin granules to the plasma membrane. Also plays a role in neurotransmitter release by inhibiting basal acetylcholine release from axon terminals and by preventing synaptic fatigue upon repetitive stimulation. Promotes as well axonal outgrowth. This is Syntaxin-binding protein 5-like (STXBP5L) from Homo sapiens (Human).